The sequence spans 316 residues: Pantothenate kinase (316 aa).

ATP is bound at residue 95 to 102 (GSVAVGKS).

It belongs to the prokaryotic pantothenate kinase family.

The protein resides in the cytoplasm. The catalysed reaction is (R)-pantothenate + ATP = (R)-4'-phosphopantothenate + ADP + H(+). It functions in the pathway cofactor biosynthesis; coenzyme A biosynthesis; CoA from (R)-pantothenate: step 1/5. The protein is Pantothenate kinase of Serratia proteamaculans (strain 568).